A 213-amino-acid chain; its full sequence is Orotate phosphoribosyltransferase (213 aa).

Lysine 26 provides a ligand contact to 5-phospho-alpha-D-ribose 1-diphosphate. 34–35 (FF) serves as a coordination point for orotate. 5-phospho-alpha-D-ribose 1-diphosphate contacts are provided by residues 72 to 73 (YK), arginine 99, lysine 100, lysine 103, histidine 105, and 124 to 132 (DDVITAGTA). Orotate contacts are provided by threonine 128 and arginine 156.

It belongs to the purine/pyrimidine phosphoribosyltransferase family. PyrE subfamily. In terms of assembly, homodimer. Requires Mg(2+) as cofactor.

The catalysed reaction is orotidine 5'-phosphate + diphosphate = orotate + 5-phospho-alpha-D-ribose 1-diphosphate. It participates in pyrimidine metabolism; UMP biosynthesis via de novo pathway; UMP from orotate: step 1/2. Catalyzes the transfer of a ribosyl phosphate group from 5-phosphoribose 1-diphosphate to orotate, leading to the formation of orotidine monophosphate (OMP). This Shigella flexneri serotype 5b (strain 8401) protein is Orotate phosphoribosyltransferase.